Here is a 134-residue protein sequence, read N- to C-terminus: UPF0412 protein YaaI (134 aa).

The N-terminal stretch at 1–23 (MKSVITISASLAISLMLCCTAQA) is a signal peptide.

This sequence belongs to the UPF0412 family.

In Escherichia coli O127:H6 (strain E2348/69 / EPEC), this protein is UPF0412 protein YaaI.